We begin with the raw amino-acid sequence, 75 residues long: Protein EGO2 (75 aa).

In Saccharomyces cerevisiae (strain ATCC 204508 / S288c) (Baker's yeast), this protein is Protein EGO2.